Here is a 610-residue protein sequence, read N- to C-terminus: DNA mismatch repair protein MutL (610 aa).

This sequence belongs to the DNA mismatch repair MutL/HexB family.

In terms of biological role, this protein is involved in the repair of mismatches in DNA. It is required for dam-dependent methyl-directed DNA mismatch repair. May act as a 'molecular matchmaker', a protein that promotes the formation of a stable complex between two or more DNA-binding proteins in an ATP-dependent manner without itself being part of a final effector complex. This is DNA mismatch repair protein MutL from Rickettsia canadensis (strain McKiel).